A 211-amino-acid chain; its full sequence is MSERGLLIVFSGPSGVGKGTVRQEIFSTPDHKFEYSVSMTTRPQRPGEVDGVDYFFRTREEFEELIKTGQMLEYAEYVGNYYGTPLTYVNETLDKGIDVFLEIEVQGALQVKSKVPDGVFVFLTPPDLDELEDRLVGRGTDSQEVIAQRIERAKEEIALMREYDYAVVNDEVALAAERVKRIIETEHFRVERVIGRYDKMIKITKNSFKAK.

The Guanylate kinase-like domain maps to 5–184 (GLLIVFSGPS…AAERVKRIIE (180 aa)). An ATP-binding site is contributed by 12–19 (GPSGVGKG).

This sequence belongs to the guanylate kinase family.

It localises to the cytoplasm. It catalyses the reaction GMP + ATP = GDP + ADP. Essential for recycling GMP and indirectly, cGMP. This Streptococcus pyogenes serotype M1 protein is Guanylate kinase.